Here is a 111-residue protein sequence, read N- to C-terminus: Small ribosomal subunit protein bS16 (111 aa).

It belongs to the bacterial ribosomal protein bS16 family.

The protein is Small ribosomal subunit protein bS16 of Rickettsia canadensis (strain McKiel).